The primary structure comprises 124 residues: Small ribosomal subunit protein uS12 (124 aa).

D89 is subject to 3-methylthioaspartic acid.

This sequence belongs to the universal ribosomal protein uS12 family. Part of the 30S ribosomal subunit. Contacts proteins S8 and S17. May interact with IF1 in the 30S initiation complex.

Functionally, with S4 and S5 plays an important role in translational accuracy. Its function is as follows. Interacts with and stabilizes bases of the 16S rRNA that are involved in tRNA selection in the A site and with the mRNA backbone. Located at the interface of the 30S and 50S subunits, it traverses the body of the 30S subunit contacting proteins on the other side and probably holding the rRNA structure together. The combined cluster of proteins S8, S12 and S17 appears to hold together the shoulder and platform of the 30S subunit. This chain is Small ribosomal subunit protein uS12, found in Mannheimia succiniciproducens (strain KCTC 0769BP / MBEL55E).